Here is a 307-residue protein sequence, read N- to C-terminus: UDP-3-O-acyl-N-acetylglucosamine deacetylase (307 aa).

Positions 78, 235, and 239 each coordinate Zn(2+). His262 (proton donor) is an active-site residue.

It belongs to the LpxC family. Zn(2+) serves as cofactor.

It catalyses the reaction a UDP-3-O-[(3R)-3-hydroxyacyl]-N-acetyl-alpha-D-glucosamine + H2O = a UDP-3-O-[(3R)-3-hydroxyacyl]-alpha-D-glucosamine + acetate. It functions in the pathway glycolipid biosynthesis; lipid IV(A) biosynthesis; lipid IV(A) from (3R)-3-hydroxytetradecanoyl-[acyl-carrier-protein] and UDP-N-acetyl-alpha-D-glucosamine: step 2/6. Catalyzes the hydrolysis of UDP-3-O-myristoyl-N-acetylglucosamine to form UDP-3-O-myristoylglucosamine and acetate, the committed step in lipid A biosynthesis. This is UDP-3-O-acyl-N-acetylglucosamine deacetylase from Geotalea uraniireducens (strain Rf4) (Geobacter uraniireducens).